The primary structure comprises 910 residues: Anoctamin-6 (910 aa).

Residues 1-300 (MKKMSRNVLL…YGEKIGIYFA (300 aa)) lie on the Cytoplasmic side of the membrane. The helical transmembrane segment at 301–321 (WLGYYTQMLLLAAVVGVACFL) threads the bilayer. Over 322 to 375 (YGYLNQDNCTWSKEVCHPDIGGKIIMCPQCDRLCPFWKLNITCESSKKLCIFDS) the chain is Extracellular. N-linked (GlcNAc...) asparagine glycosylation occurs at N329. Intrachain disulfides connect C330/C371, C337/C364, C348/C806, C351/C355, and C595/C600. N361 is a glycosylation site (N-linked (GlcNAc...) asparagine). A helical transmembrane segment spans residues 376-396 (FGTLVFAVFMGVWVTLFLEFW). Over 397–455 (KRRQAELEYEWDTVELQQEEQARPEYEARCTHVVINEITQEEERIPFTAWGKCIRITLC) the chain is Cytoplasmic. Residues 456–476 (ASAVFFWILLIIASVIGIIVY) form a helical membrane-spanning segment. The Extracellular portion of the chain corresponds to 477-509 (RLSVFIVFSAKLPKNINGTDPIQKYLTPQTATS). A glycan (N-linked (GlcNAc...) asparagine) is linked at N493. A helical transmembrane segment spans residues 510-530 (ITASIISFIIIMILNTIYEKV). The Cytoplasmic portion of the chain corresponds to 531–551 (AIMITNFELPRTQTDYENSLT). The chain crosses the membrane as a helical span at residues 552 to 572 (MKMFLFQFVNYYSSCFYIAFF). The Extracellular segment spans residues 573 to 601 (KGKFVGYPGDPVYWLGKYRNEECDPGGCL). The helical transmembrane segment at 602-621 (LELTTQLTIIMGGKAIWNNI) threads the bilayer. Topologically, residues 622–663 (QEVLLPWIMNLIGRFHRVSGSEKITPRWEQDYHLQPMGKLGL) are cytoplasmic. Ca(2+)-binding residues include E623, E666, and E669. 2 consecutive transmembrane segments (helical) span residues 664 to 684 (FYEYLEMIIQFGFVTLFVASF) and 685 to 705 (PLAPLLALVNNILEIRVDAWK). The Cytoplasmic portion of the chain corresponds to 706–722 (LTTQFRRLVPEKAQDIG). Residues 723-743 (AWQPIMQGIAILAVVTNAMII) traverse the membrane as a helical segment. Residues 744-836 (AFTSDMIPRL…YWHVIAAKLA (93 aa)) lie on the Extracellular side of the membrane. 3 N-linked (GlcNAc...) asparagine glycosylation sites follow: N777, N790, and N802. The chain crosses the membrane as a helical span at residues 837 to 857 (FIIVMEHVIYSVKFFISYAIP). Over 858–910 (DVSKRTKSKIQREKYLTQKLLHENHLKDMTKNMGVIAERMIEAVDNNLRPKSE) the chain is Cytoplasmic.

This sequence belongs to the anoctamin family. Homodimer. As to expression, expressed in embryonic stem cell, fetal liver, retina, chronic myologenous leukemia and intestinal cancer.

It localises to the cell membrane. The enzyme catalyses a 1,2-diacyl-sn-glycero-3-phospho-L-serine(in) = a 1,2-diacyl-sn-glycero-3-phospho-L-serine(out). The catalysed reaction is a beta-D-galactosyl-(1&lt;-&gt;1')-N-acylsphing-4-enine(out) = a beta-D-galactosyl-(1&lt;-&gt;1')-N-acylsphing-4-enine(in). It carries out the reaction a 1,2-diacyl-sn-glycero-3-phosphocholine(in) = a 1,2-diacyl-sn-glycero-3-phosphocholine(out). With respect to regulation, exhibits synergistic gating by Ca(2+) and voltage. Inhibited by some non-specific cation channel blockers such as: ruthenium red, 2-aminoethyl diphenylborinate (2APB), gadolinium and cadmium ions. Its activity is regulated as follows. (Microbial infection) Activated by SARS coronavirus-2/SARS-CoV-2 spike protein. In terms of biological role, small-conductance calcium-activated nonselective cation (SCAN) channel which acts as a regulator of phospholipid scrambling in platelets and osteoblasts. Phospholipid scrambling results in surface exposure of phosphatidylserine which in platelets is essential to trigger the clotting system whereas in osteoblasts is essential for the deposition of hydroxyapatite during bone mineralization. Has calcium-dependent phospholipid scramblase activity; scrambles phosphatidylserine, phosphatidylcholine and galactosylceramide. Can generate outwardly rectifying chloride channel currents in airway epithelial cells and Jurkat T lymphocytes. Functionally, (Microbial infection) Upon SARS coronavirus-2/SARS-CoV-2 infection, is activated by spike protein which increases the amplitude of spontaneous Ca(2+) signals and is required for spike-mediated syncytia. The polypeptide is Anoctamin-6 (Homo sapiens (Human)).